Reading from the N-terminus, the 469-residue chain is ATP synthase subunit beta (469 aa).

Residue 156-163 (GGAGVGKT) participates in ATP binding.

This sequence belongs to the ATPase alpha/beta chains family. In terms of assembly, F-type ATPases have 2 components, CF(1) - the catalytic core - and CF(0) - the membrane proton channel. CF(1) has five subunits: alpha(3), beta(3), gamma(1), delta(1), epsilon(1). CF(0) has three main subunits: a(1), b(2) and c(9-12). The alpha and beta chains form an alternating ring which encloses part of the gamma chain. CF(1) is attached to CF(0) by a central stalk formed by the gamma and epsilon chains, while a peripheral stalk is formed by the delta and b chains.

It is found in the cell membrane. It carries out the reaction ATP + H2O + 4 H(+)(in) = ADP + phosphate + 5 H(+)(out). Its function is as follows. Produces ATP from ADP in the presence of a proton gradient across the membrane. The catalytic sites are hosted primarily by the beta subunits. The chain is ATP synthase subunit beta from Bacillus cereus (strain AH820).